A 428-amino-acid polypeptide reads, in one-letter code: Glutamate-1-semialdehyde 2,1-aminomutase (428 aa).

Position 267 is an N6-(pyridoxal phosphate)lysine (lysine 267).

It belongs to the class-III pyridoxal-phosphate-dependent aminotransferase family. HemL subfamily. Homodimer. It depends on pyridoxal 5'-phosphate as a cofactor.

The protein localises to the cytoplasm. It carries out the reaction (S)-4-amino-5-oxopentanoate = 5-aminolevulinate. It functions in the pathway porphyrin-containing compound metabolism; protoporphyrin-IX biosynthesis; 5-aminolevulinate from L-glutamyl-tRNA(Glu): step 2/2. It participates in porphyrin-containing compound metabolism; chlorophyll biosynthesis. This Prochlorococcus marinus (strain MIT 9313) protein is Glutamate-1-semialdehyde 2,1-aminomutase.